We begin with the raw amino-acid sequence, 89 residues long: MALDVQEKAQIVADYQQAVGDTGSPEVQVALLTANINKLQGHFKANGKDHHSRRGLIRMVNQRRKLLDYLKGKDVSRYSALIARLGLRR.

The protein belongs to the universal ribosomal protein uS15 family. In terms of assembly, part of the 30S ribosomal subunit. Forms a bridge to the 50S subunit in the 70S ribosome, contacting the 23S rRNA.

One of the primary rRNA binding proteins, it binds directly to 16S rRNA where it helps nucleate assembly of the platform of the 30S subunit by binding and bridging several RNA helices of the 16S rRNA. In terms of biological role, forms an intersubunit bridge (bridge B4) with the 23S rRNA of the 50S subunit in the ribosome. In Pseudomonas fluorescens (strain Pf0-1), this protein is Small ribosomal subunit protein uS15.